The primary structure comprises 63 residues: Ferredoxin (63 aa).

The 4Fe-4S ferredoxin-type domain maps to 3–31; that stretch reads WKVSVDVDTCIGDAICASLCPDVFEMGDD. Positions 12, 15, and 18 each coordinate [4Fe-4S] cluster. Cys-22 and Cys-45 are oxidised to a cystine. Cys-53 provides a ligand contact to [4Fe-4S] cluster.

[4Fe-4S] cluster serves as cofactor. It depends on [3Fe-4S] cluster as a cofactor.

In terms of biological role, ferredoxins are iron-sulfur proteins that transfer electrons in a wide variety of metabolic reactions. The sequence is that of Ferredoxin (fdxA) from Thermococcus kodakarensis (strain ATCC BAA-918 / JCM 12380 / KOD1) (Pyrococcus kodakaraensis (strain KOD1)).